A 112-amino-acid chain; its full sequence is Large ribosomal subunit protein uL22 (112 aa).

The protein belongs to the universal ribosomal protein uL22 family. Part of the 50S ribosomal subunit.

This protein binds specifically to 23S rRNA; its binding is stimulated by other ribosomal proteins, e.g. L4, L17, and L20. It is important during the early stages of 50S assembly. It makes multiple contacts with different domains of the 23S rRNA in the assembled 50S subunit and ribosome. Functionally, the globular domain of the protein is located near the polypeptide exit tunnel on the outside of the subunit, while an extended beta-hairpin is found that lines the wall of the exit tunnel in the center of the 70S ribosome. This chain is Large ribosomal subunit protein uL22, found in Desulfovibrio desulfuricans (strain ATCC 27774 / DSM 6949 / MB).